A 609-amino-acid chain; its full sequence is UvrABC system protein C (609 aa).

One can recognise a GIY-YIG domain in the interval 16–94; it reads SSAGVYRMYD…IKQYMPKYNV (79 aa). The region spanning 203 to 238 is the UVR domain; sequence KQVISELVAKMEEAAGQQAYEQAARFRDQIMALRRV.

This sequence belongs to the UvrC family. As to quaternary structure, interacts with UvrB in an incision complex.

Its subcellular location is the cytoplasm. Functionally, the UvrABC repair system catalyzes the recognition and processing of DNA lesions. UvrC both incises the 5' and 3' sides of the lesion. The N-terminal half is responsible for the 3' incision and the C-terminal half is responsible for the 5' incision. The polypeptide is UvrABC system protein C (Shewanella sp. (strain ANA-3)).